We begin with the raw amino-acid sequence, 257 residues long: Leucine-rich repeat-containing protein 3 (257 aa).

Positions 1–32 (MGPRGRQSPSATLAPSQGSCFFILFCLRLGAS) are cleaved as a signal peptide. Residues 33–64 (CPQACQCPDHAGAVAVHCSSRGLQEIPRDIPA) enclose the LRRNT domain. LRR repeat units lie at residues 65–86 (DTVL…AFQH), 89–110 (QLRE…AFSG), and 114–135 (GLRL…ALGK). Residues 145-198 (NPLHCECALQEALWELKLDPDSVDEIACHTSAQEQFVGKPLIQVLDSGASFCST) enclose the LRRCT domain. The chain crosses the membrane as a helical span at residues 205–225 (VAMLVTMFGWFTMVIAYVVYY).

This sequence belongs to the LRRC3 family.

It is found in the membrane. The protein is Leucine-rich repeat-containing protein 3 (Lrrc3) of Mus musculus (Mouse).